The following is a 246-amino-acid chain: MKYDIIGDIHGCLQEFQNLTEKLGYNWSSGLPVHPDQRKLAFVGDITDRGPHSLRMIEIVWELVIHKKVAYYAPGNHCNKLYRFFLGRNVTIAHGLETTVAEYEALPSHKQNMIKEKFITLYEQSPLYHVLDEKRLLVCHAGIRQDYIGRQDKKVQTFVLYGDITGEKHADGSPVRRDWAKEYKGTTWIVYGHTPVKEPRFVNHTVNIDTGAVFGGKLTGLRYPEMEIVSVPSSLPFVPEKFRPIS.

The protein belongs to the PrpE family. It depends on Ni(2+) as a cofactor.

It carries out the reaction P(1),P(4)-bis(5'-guanosyl) tetraphosphate + H2O = GMP + GTP + 2 H(+). Its function is as follows. Asymmetrically hydrolyzes Ap4p to yield AMP and ATP. The sequence is that of Bis(5'-nucleosyl)-tetraphosphatase PrpE [asymmetrical] from Bacillus cereus (strain AH187).